Consider the following 338-residue polypeptide: Anthranilate phosphoribosyltransferase (338 aa).

5-phospho-alpha-D-ribose 1-diphosphate-binding positions include G82, 85 to 86 (GD), T90, 92 to 95 (NIST), 110 to 118 (KHGNRAASS), and S122. G82 is an anthranilate binding site. S94 serves as a coordination point for Mg(2+). N113 lines the anthranilate pocket. Anthranilate is bound at residue R168. Residues D226 and E227 each contribute to the Mg(2+) site.

It belongs to the anthranilate phosphoribosyltransferase family. As to quaternary structure, homodimer. It depends on Mg(2+) as a cofactor.

The catalysed reaction is N-(5-phospho-beta-D-ribosyl)anthranilate + diphosphate = 5-phospho-alpha-D-ribose 1-diphosphate + anthranilate. The protein operates within amino-acid biosynthesis; L-tryptophan biosynthesis; L-tryptophan from chorismate: step 2/5. In terms of biological role, catalyzes the transfer of the phosphoribosyl group of 5-phosphorylribose-1-pyrophosphate (PRPP) to anthranilate to yield N-(5'-phosphoribosyl)-anthranilate (PRA). The chain is Anthranilate phosphoribosyltransferase from Deinococcus radiodurans (strain ATCC 13939 / DSM 20539 / JCM 16871 / CCUG 27074 / LMG 4051 / NBRC 15346 / NCIMB 9279 / VKM B-1422 / R1).